A 393-amino-acid polypeptide reads, in one-letter code: Aspartate aminotransferase (393 aa).

The L-aspartate site is built by G38, W124, and N174. Position 237 is an N6-(pyridoxal phosphate)lysine (K237).

Belongs to the class-I pyridoxal-phosphate-dependent aminotransferase family. Homodimer. It depends on pyridoxal 5'-phosphate as a cofactor.

The protein resides in the cytoplasm. It catalyses the reaction L-aspartate + 2-oxoglutarate = oxaloacetate + L-glutamate. This Geobacillus stearothermophilus (Bacillus stearothermophilus) protein is Aspartate aminotransferase (aspC).